The following is a 138-amino-acid chain: Small ribosomal subunit protein uS11c (138 aa).

The tract at residues 1-21 (MTKSIPRIGSRRGGRIASRKN) is disordered. Over residues 9–21 (GSRRGGRIASRKN) the composition is skewed to basic residues.

It belongs to the universal ribosomal protein uS11 family. Part of the 30S ribosomal subunit.

It localises to the plastid. Its subcellular location is the chloroplast. The chain is Small ribosomal subunit protein uS11c from Calycanthus floridus var. glaucus (Eastern sweetshrub).